We begin with the raw amino-acid sequence, 441 residues long: Methylenetetrahydrofolate--tRNA-(uracil-5-)-methyltransferase TrmFO (441 aa).

An FAD-binding site is contributed by Gly11–Gly16.

Belongs to the MnmG family. TrmFO subfamily. FAD is required as a cofactor.

It localises to the cytoplasm. It carries out the reaction uridine(54) in tRNA + (6R)-5,10-methylene-5,6,7,8-tetrahydrofolate + NADH + H(+) = 5-methyluridine(54) in tRNA + (6S)-5,6,7,8-tetrahydrofolate + NAD(+). The enzyme catalyses uridine(54) in tRNA + (6R)-5,10-methylene-5,6,7,8-tetrahydrofolate + NADPH + H(+) = 5-methyluridine(54) in tRNA + (6S)-5,6,7,8-tetrahydrofolate + NADP(+). Its function is as follows. Catalyzes the folate-dependent formation of 5-methyl-uridine at position 54 (M-5-U54) in all tRNAs. The sequence is that of Methylenetetrahydrofolate--tRNA-(uracil-5-)-methyltransferase TrmFO from Lactiplantibacillus plantarum (strain ATCC BAA-793 / NCIMB 8826 / WCFS1) (Lactobacillus plantarum).